A 233-amino-acid polypeptide reads, in one-letter code: Demethylmenaquinone methyltransferase (233 aa).

S-adenosyl-L-methionine contacts are provided by residues T58, D79, and 106 to 107 (NA).

The protein belongs to the class I-like SAM-binding methyltransferase superfamily. MenG/UbiE family.

The enzyme catalyses a 2-demethylmenaquinol + S-adenosyl-L-methionine = a menaquinol + S-adenosyl-L-homocysteine + H(+). It functions in the pathway quinol/quinone metabolism; menaquinone biosynthesis; menaquinol from 1,4-dihydroxy-2-naphthoate: step 2/2. Its function is as follows. Methyltransferase required for the conversion of demethylmenaquinol (DMKH2) to menaquinol (MKH2). The chain is Demethylmenaquinone methyltransferase from Bacillus velezensis (strain DSM 23117 / BGSC 10A6 / LMG 26770 / FZB42) (Bacillus amyloliquefaciens subsp. plantarum).